The sequence spans 696 residues: MDTVDGGDVPSEARHRWEDLVAQIEAARFAYYVRNSSPLSDGQYDALERELRALEEQHPQLRTPDSPTQTVGGTFSTEFTTVDHPERMLSLDNAFSTDELSAWAARVEREVGAGARYLCEPKIDGLAIDLVYEDGRLVRGVTRGDGRTGEDVTFNVRTVEDVPHRLTGADVPEFLEVRGEVFFHLDGFAAINAGLVEAGKPPFANPRNAAAGSLRQKDPRVTATRPLRMLVHGVGARRGMENDTQSGAYEKLAAWGLPTSPRVKVVDTLDEVAEYVRFYGEHRHDVEHEIDGVVVKVDQVPLQRRLGSTSRAPRWAIAYKYPPEEVTTSLLDIQVNVGRTGRVTPFAVLEPVKVAGSTVAMATLHNASEVVRKGVLIGDTVVVRKAGDVIPEVLGPVVESRTGAEREFVMPTVCPECGTPLAHQRADDVDIRCPNSRSCPAQLRERVFHLAGRGSFDVEALGDKAAAALLQAGVIADEGDLFTLTEDDLVGVPLFTTKAGTVSANGRRLLANLHDRKDQPLWRVLVGLSIRHVGPTAARALADRFGSMEAIEAATAEDIASAEGVGPTIAEAVVEWLAVDWHRDVVRKWREAGVRMADERDESTPRTLEGLTIVVTGSLSGFSRDEAKEAVLSRGGKASSAVSKKTSFVVVGEAAGSKADKAEQLGVPVLDEEGFVALLEGGPDAVARPAEEPGQG.

Residues 41-45 (DGQYD), 90-91 (SL), and Glu-120 each bind NAD(+). The active-site N6-AMP-lysine intermediate is the Lys-122. NAD(+) contacts are provided by Arg-143, Glu-180, Lys-296, and Lys-320. Zn(2+) is bound by residues Cys-414, Cys-417, Cys-433, and Cys-439. The BRCT domain occupies 603–692 (STPRTLEGLT…PDAVARPAEE (90 aa)).

It belongs to the NAD-dependent DNA ligase family. LigA subfamily. Mg(2+) serves as cofactor. Requires Mn(2+) as cofactor.

The enzyme catalyses NAD(+) + (deoxyribonucleotide)n-3'-hydroxyl + 5'-phospho-(deoxyribonucleotide)m = (deoxyribonucleotide)n+m + AMP + beta-nicotinamide D-nucleotide.. Functionally, DNA ligase that catalyzes the formation of phosphodiester linkages between 5'-phosphoryl and 3'-hydroxyl groups in double-stranded DNA using NAD as a coenzyme and as the energy source for the reaction. It is essential for DNA replication and repair of damaged DNA. The sequence is that of DNA ligase from Kineococcus radiotolerans (strain ATCC BAA-149 / DSM 14245 / SRS30216).